The following is a 353-amino-acid chain: Transcription termination/antitermination protein NusG (353 aa).

The 35-residue stretch at 301–335 (VGDMVKIISGPFEDFAGVIKEIDPERQELKVNVTI) folds into the KOW domain.

This sequence belongs to the NusG family.

With respect to regulation, regulated by autoinhibition via interaction of the N-terminal and the C-terminal domains. Autoinhibition may prevent NusG from interacting prematurely with other components of the transcription complex or non-specific interactions with other cellular components. Participates in transcription elongation, termination and antitermination. This is Transcription termination/antitermination protein NusG from Thermotoga maritima (strain ATCC 43589 / DSM 3109 / JCM 10099 / NBRC 100826 / MSB8).